The primary structure comprises 315 residues: Glutaminase (315 aa).

Positions 70, 120, 166, 173, 197, 249, and 267 each coordinate substrate.

Belongs to the glutaminase family. In terms of assembly, homotetramer.

It catalyses the reaction L-glutamine + H2O = L-glutamate + NH4(+). This chain is Glutaminase, found in Rhizobium meliloti (strain 1021) (Ensifer meliloti).